The primary structure comprises 431 residues: MNSHYQNHSLENFFSTNLSATDDAVFAGIQAEFTRQNEQIELIASENIVSKAVMQAQGTCLTNKYAEGYPGRRYYGGCEHVDTVEAIAIERAKKLFNCEYANVQPHSGAQANGAVKLALLQPGDTIMGMSLDAGGHLTHGARPALSGKWFNAVQYGVDKETLEINYDDVRALAVEHKPKMIIAGGSAIPRVIDFAKFREIADEVGAILMVDMAHIAGLIATGAHPSPLPHAHVVTTTTHKTLRGPRGGMILTNHEEIIKKINSAVFPGLQGGPLMHVIAAKAVAFGEALGPEFKTYIDSVIDNAKVLAEVLQTRGCDIVTGGTDTHLMLVDLRPKGLKGNKAEEALERAGITCNKNGIPFDTEKPMITSGVRLGTPAGTSRGFGAEEFKLIGHWIGDVLDGLVENPEGNAEVEQRVRKEVKALCSRFPLYQ.

(6S)-5,6,7,8-tetrahydrofolate is bound by residues L131 and 135 to 137; that span reads GHL. An N6-(pyridoxal phosphate)lysine modification is found at K240. E256 provides a ligand contact to (6S)-5,6,7,8-tetrahydrofolate.

It belongs to the SHMT family. As to quaternary structure, homodimer. Requires pyridoxal 5'-phosphate as cofactor.

The protein resides in the cytoplasm. It carries out the reaction (6R)-5,10-methylene-5,6,7,8-tetrahydrofolate + glycine + H2O = (6S)-5,6,7,8-tetrahydrofolate + L-serine. It participates in one-carbon metabolism; tetrahydrofolate interconversion. The protein operates within amino-acid biosynthesis; glycine biosynthesis; glycine from L-serine: step 1/1. Functionally, catalyzes the reversible interconversion of serine and glycine with tetrahydrofolate (THF) serving as the one-carbon carrier. This reaction serves as the major source of one-carbon groups required for the biosynthesis of purines, thymidylate, methionine, and other important biomolecules. Also exhibits THF-independent aldolase activity toward beta-hydroxyamino acids, producing glycine and aldehydes, via a retro-aldol mechanism. The polypeptide is Serine hydroxymethyltransferase 2 (Vibrio vulnificus (strain CMCP6)).